A 90-amino-acid chain; its full sequence is UPF0223 protein lmo1058 (90 aa).

This sequence belongs to the UPF0223 family.

The polypeptide is UPF0223 protein lmo1058 (Listeria monocytogenes serovar 1/2a (strain ATCC BAA-679 / EGD-e)).